Reading from the N-terminus, the 555-residue chain is Cytochrome P450 monooxygeanse terQ (555 aa).

The helical transmembrane segment at 10–30 threads the bilayer; sequence VPAHAWPTITVAGAVMVVVLL. Residue cysteine 479 coordinates heme. The disordered stretch occupies residues 535 to 555; it reads DAGNTARVDPGAPDGVASEPS.

The protein belongs to the cytochrome P450 family. The cofactor is heme.

The protein localises to the membrane. It functions in the pathway secondary metabolite biosynthesis. Its function is as follows. Cytochrome P450 monooxygeanse; part of the gene cluster that mediates the biosynthesis of terpendoles, indole-diterpene (IDT) mycotoxins including terpendole I, terpendole K, terpendole C, as well as the kinesin Eg5 inhibitor terpendole E. TerQ is a C11-hydroxylating enzyme that converts paspalline into terpendole E. Is also able to hydroxylate 13-desoxyterpendole I at C-13 to produce terpendole I. Terpendoles biosynthesis begins with the synthesis of geranylgeranyl diphosphate (GGPP) by a yet unidentified GGPP synthase. Condensation of indole-3-glycerol phosphate with GGPP by the prenyltransferase terC then forms 3-geranylgeranylindole (3-GGI), followed by epoxidation and cyclization of this intermediate (by the FAD-dependent monooxygeanse terM and the terpene cyclase terB) to form paspaline. The cytochrome monooxygenase terQ then hydroxylates paspalline at C-11 to yield terpendole E. The cytochrome monooxygenase terP converts terpendole E to 13-desoxyterpendole I, and terQ converts 13-desoxyterpendole I into terpendole I. TerF and terK are required for conversion of terpendole I to terpendole C which is further converted to terpendole K. The chain is Cytochrome P450 monooxygeanse terQ from Tolypocladium album (Soil fungus).